A 240-amino-acid polypeptide reads, in one-letter code: Sugar fermentation stimulation protein homolog (240 aa).

The protein belongs to the SfsA family.

In Methanothermobacter thermautotrophicus (strain ATCC 29096 / DSM 1053 / JCM 10044 / NBRC 100330 / Delta H) (Methanobacterium thermoautotrophicum), this protein is Sugar fermentation stimulation protein homolog.